A 158-amino-acid polypeptide reads, in one-letter code: NADPH-dependent 7-cyano-7-deazaguanine reductase (158 aa).

The active-site Thioimide intermediate is Cys-56. Asp-63 (proton donor) is an active-site residue. Substrate is bound by residues 78–80 and 97–98; these read LES and HE.

The protein belongs to the GTP cyclohydrolase I family. QueF type 1 subfamily.

It is found in the cytoplasm. The catalysed reaction is 7-aminomethyl-7-carbaguanine + 2 NADP(+) = 7-cyano-7-deazaguanine + 2 NADPH + 3 H(+). Its pathway is tRNA modification; tRNA-queuosine biosynthesis. Its function is as follows. Catalyzes the NADPH-dependent reduction of 7-cyano-7-deazaguanine (preQ0) to 7-aminomethyl-7-deazaguanine (preQ1). This chain is NADPH-dependent 7-cyano-7-deazaguanine reductase, found in Nitrobacter winogradskyi (strain ATCC 25391 / DSM 10237 / CIP 104748 / NCIMB 11846 / Nb-255).